The primary structure comprises 81 residues: Antitoxin MT2731 (81 aa).

Functionally, antitoxin component of a type II toxin-antitoxin (TA) system. Neutralizes the effect of cognate toxin MT2730. This chain is Antitoxin MT2731, found in Mycobacterium tuberculosis (strain CDC 1551 / Oshkosh).